The sequence spans 254 residues: Glutathione S-transferase F14 (254 aa).

One can recognise a GST N-terminal domain in the interval 4 to 85 (SKMKLHCGFI…YLAEQYKDVG (82 aa)). Glutathione-binding positions include 42-43 (AK), 56-57 (EV), and 69-70 (EP). Residues 92-231 (DPKKRAIMSM…DLMKQRRLPI (140 aa)) enclose the GST C-terminal domain.

This sequence belongs to the GST superfamily. Phi family.

Its subcellular location is the cytoplasm. It localises to the cytosol. The enzyme catalyses RX + glutathione = an S-substituted glutathione + a halide anion + H(+). May be involved in the conjugation of reduced glutathione to a wide number of exogenous and endogenous hydrophobic electrophiles and have a detoxification role against certain herbicides. This Arabidopsis thaliana (Mouse-ear cress) protein is Glutathione S-transferase F14.